The sequence spans 509 residues: Maturase K (509 aa).

Belongs to the intron maturase 2 family. MatK subfamily.

Its subcellular location is the plastid. The protein resides in the chloroplast. Functionally, usually encoded in the trnK tRNA gene intron. Probably assists in splicing its own and other chloroplast group II introns. The sequence is that of Maturase K from Nicotiana acuminata (Acuminate tobacco).